A 434-amino-acid polypeptide reads, in one-letter code: Nuclear envelope integral membrane protein 1b (434 aa).

The signal sequence occupies residues 1–29 (MAGEVEGRGCGFSLGVLVTLLVLPLPSLC). Transmembrane regions (helical) follow at residues 151 to 171 (PRLF…DTLS), 175 to 195 (LFFY…ILVF), 206 to 226 (PFFA…QLVF), 239 to 259 (YLIV…YIYG), and 280 to 300 (LLMY…VIAF). Positions 176-287 (FFYSTGITVG…GLLLMYVSVQ (112 aa)) are a; required for its colocalization with lamins at the nuclear envelope. The short motif at 317–325 (RKIKLKRAK) is the Nuclear localization signal element. Positions 326 to 395 (PGPPRLLTEE…LTPNEVSVHE (70 aa)) are b; interaction with ran. The interval 326 to 434 (PGPPRLLTEE…PLYPIPRSVF (109 aa)) is interaction with banf1-a and banf1-b. The interval 368–375 (SRIQSPKR) is BAF-binding site (BBS); essential for interaction with banf1-a, banf1-b and ran.

The protein belongs to the NEMP family. Interacts with banf1-a and banf1-b. Interacts with ran-gtp. In terms of processing, phosphorylated.

Its subcellular location is the nucleus inner membrane. It is found in the nucleus envelope. In concert with ran, required for proper eye development. May be involved in the expression of early eye marker genes. Contributes to nuclear envelope stiffness in germ cells. Required for fertility. Essential for normal erythropoiesis. Required for efficient nuclear envelope opening and enucleation during the late stages of erythroblast maturation. The sequence is that of Nuclear envelope integral membrane protein 1b (nemp1b) from Xenopus laevis (African clawed frog).